A 301-amino-acid polypeptide reads, in one-letter code: Light-independent protochlorophyllide reductase iron-sulfur ATP-binding protein (301 aa).

Residues 1-13 (MNVTLRPPLTTAP) show a composition bias toward low complexity. A disordered region spans residues 1–21 (MNVTLRPPLTTAPRRPDGAGS). ATP is bound by residues 45–50 (GIGKST) and K74. S49 is a Mg(2+) binding site. [4Fe-4S] cluster contacts are provided by C130 and C164. Residues 215-216 (NR) and 239-241 (PDL) each bind ATP.

The protein belongs to the NifH/BchL/ChlL family. Homodimer. Protochlorophyllide reductase is composed of three subunits; BchL, BchN and BchB. [4Fe-4S] cluster serves as cofactor.

It carries out the reaction chlorophyllide a + oxidized 2[4Fe-4S]-[ferredoxin] + 2 ADP + 2 phosphate = protochlorophyllide a + reduced 2[4Fe-4S]-[ferredoxin] + 2 ATP + 2 H2O. It participates in porphyrin-containing compound metabolism; bacteriochlorophyll biosynthesis (light-independent). Functionally, component of the dark-operative protochlorophyllide reductase (DPOR) that uses Mg-ATP and reduced ferredoxin to reduce ring D of protochlorophyllide (Pchlide) to form chlorophyllide a (Chlide). This reaction is light-independent. The L component serves as a unique electron donor to the NB-component of the complex, and binds Mg-ATP. This chain is Light-independent protochlorophyllide reductase iron-sulfur ATP-binding protein, found in Bradyrhizobium sp. (strain BTAi1 / ATCC BAA-1182).